An 834-amino-acid chain; its full sequence is Sodium/hydrogen exchanger 3 (834 aa).

Residues 1-25 (MWGLGARGPDRGLLLALALGGLARA) form the signal peptide. Topologically, residues 26–51 (GGVEVEPGGAHGESGGFQVVTFEWAH) are extracellular. The helical transmembrane segment at 52-74 (VQDPYVIALWILVASLAKIGFHL) threads the bilayer. The Cytoplasmic segment spans residues 75–82 (SHKVTSVV). A helical membrane pass occupies residues 83–102 (PESALLIVLGLVLGGIVWAA). Over 103 to 111 (DHIASFTLT) the chain is Extracellular. Residues 112 to 129 (PTVFFFYLLPPIVLDAGY) form a helical membrane-spanning segment. Residues 130-132 (FMP) are Cytoplasmic-facing. The helical transmembrane segment at 133-168 (NRLFFGNLGTILLYAVVGTVWNAATTGLSLYGVFLS) threads the bilayer. A 1,2-diacyl-sn-glycero-3-phospho-(1D-myo-inositol) contacts are provided by Gly-138, Gly-141, and Thr-142. Topologically, residues 169–181 (GLMGDLQIGLLDF) are extracellular. A helical membrane pass occupies residues 182–203 (LLFGSLMAAVDPVAVLAVFEEV). The Cytoplasmic portion of the chain corresponds to 204-205 (HV). Residues 206–237 (NEVLFIIVFGESLLNDAVTVVLYNVFESFVAL) traverse the membrane as a helical segment. Residues 238 to 244 (GGDNVTG) are Extracellular-facing. A glycan (N-linked (GlcNAc...) asparagine) is linked at Asn-241. The chain crosses the membrane as a helical span at residues 245–279 (VDCVKGIVSFFVVSLGGTLVGVVFAFLLSLVTRFT). Residues 280–281 (KH) lie on the Cytoplasmic side of the membrane. A helical transmembrane segment spans residues 282-304 (VRIIEPGFVFIISYLSYLTSEML). Over 305-306 (SL) the chain is Extracellular. A helical transmembrane segment spans residues 307 to 323 (SAILAITFCGICCQKYV). At 324-330 (KANISEQ) the chain is on the cytoplasmic side. A helical transmembrane segment spans residues 331–359 (SATTVRYTMKMLASSAETIIFMFLGISAV). Over 360 to 367 (NPFIWTWN) the chain is Extracellular. The helical transmembrane segment at 368-389 (TAFVLLTLVFISVYRAIGVVLQ) threads the bilayer. The Cytoplasmic portion of the chain corresponds to 390–402 (TWLLNRYRMVQLE). Residue Met-398 coordinates a 1,2-diacyl-sn-glycero-3-phospho-(1D-myo-inositol). A helical membrane pass occupies residues 403–426 (PIDQVVLSYGGLRGAVAFALVVLL). Residues 427–433 (DGDKVKE) are Extracellular-facing. The helical transmembrane segment at 434–467 (KNLFVSTTIIVVFFTVIFQGLTIKPLVQWLKVKR) threads the bilayer. Residues 468–834 (SEHREPRLNE…PAALPESTHM (367 aa)) lie on the Cytoplasmic side of the membrane. Residues Gln-497, Ile-498, and His-500 each coordinate a 1,2-diacyl-sn-glycero-3-phospho-(1D-myo-inositol). Residues Ser-555 and Ser-563 each carry the phosphoserine modification. Residues 575–589 (RSSTVEASVSYLLRE) form an interaction with EZR region. Positions 590–667 (NVSAVCLDMQ…RKRLESFKST (78 aa)) are interaction with NHERF4. The interaction with AHCYL1 stretch occupies residues 591–695 (VSAVCLDMQS…AQKRRNSSIP (105 aa)). Phosphoserine occurs at positions 592 and 607. Phosphoserine; by SGK1 is present on Ser-663. Over residues 679–691 (KLYKRERAQKRRN) the composition is skewed to basic residues. Positions 679 to 728 (KLYKRERAQKRRNSSIPNGKLPMESPAQNFTIKEKDLELSDTEEPPNYDE) are disordered. The span at 717–728 (LSDTEEPPNYDE) shows a compositional bias: acidic residues. Residues Ser-718, Ser-810, and Ser-813 each carry the phosphoserine modification. The tract at residues 814–834 (FLQADGPEERPPAALPESTHM) is disordered.

This sequence belongs to the monovalent cation:proton antiporter 1 (CPA1) transporter (TC 2.A.36) family. In terms of assembly, homodimer. Found in the forms of complex and dynamic macromolecular complexes. Binds NHERF1 and NHERF2. Interacts with CHP1; increases SLC9A3 trafficking and activity at the plasma membrane. Interacts with CHP2 and SHANK2. Interacts with PDZK1 (via C-terminal PDZ domain). Interacts with NHERF4 and interaction decrease in response to elevated calcium ion levels. Interacts with AHCYL1; the interaction is required for SLC9A3 activity. Interacts with SNX27 (via PDZ domains); directs SLC9A3 membrane insertion from early endosomes to the plasma membrane. Interacts with EZR; interaction targets SLC9A3 to the apical membrane. In terms of processing, phosphorylated by PKA, which inhibits activity. Phosphorylation at Ser-663 by SGK1 is associated with increased abundance at the cell membrane. Phosphorylation at Ser-718 by CSNK2A1 regulates SLC9A3 activity through the formation of multiple signaling complexes.

Its subcellular location is the apical cell membrane. The protein localises to the cell membrane. The protein resides in the recycling endosome membrane. It is found in the early endosome membrane. It catalyses the reaction Na(+)(in) + H(+)(out) = Na(+)(out) + H(+)(in). Seems to switch between active and inactive modes in response to various stimuli. Activated directly or indirectly by membrane phosphatidylinositol (PIs). Regulated by a variety of auxiliary proteins, which facilitate the maturation, cell surface expression and function of the transporter. Inhibited specifically by the drug tenapanor. Plasma membrane Na(+)/H(+) antiporter. Exchanges intracellular H(+) ions for extracellular Na(+) in 1:1 stoichiometry, playing a key role in salt and fluid absorption and pH homeostasis. Major apical Na(+)/H(+) exchanger in kidney and intestine playing an important role in renal and intestine Na(+) absorption and blood pressure regulation. In Homo sapiens (Human), this protein is Sodium/hydrogen exchanger 3.